The sequence spans 243 residues: MIILDINQNYKYFMFNKVCLKFKIKNFNILVIYLYDIKEKNIYKTIKNKIKNFSYFFKKMPCIINIKYLSEEDQYFWKYFHKKLSNLGLCIIGVSGCNNKIWEKIITRNGLLIFKEQINKKIFYEKKNKITKINNNYIIDKPIRSGQTIYAKKKNLIIMNTVNSGAEVIADGDIHIYGIMRGRASAGASKDTKSQIFCTKLYAEFISIAGKNWINENVLNSYLGKPVRFYIKNDILTIQKFSL.

The protein belongs to the MinC family. As to quaternary structure, interacts with MinD and FtsZ.

Functionally, cell division inhibitor that blocks the formation of polar Z ring septums. Rapidly oscillates between the poles of the cell to destabilize FtsZ filaments that have formed before they mature into polar Z rings. Prevents FtsZ polymerization. The chain is Probable septum site-determining protein MinC from Wigglesworthia glossinidia brevipalpis.